A 104-amino-acid chain; its full sequence is Sweet protein mabinlin-1 (104 aa).

4 disulfide bridges follow: cysteine 4/cysteine 53, cysteine 17/cysteine 42, cysteine 43/cysteine 91, and cysteine 55/cysteine 99.

Belongs to the 2S seed storage albumins family. In terms of assembly, heterodimer of a small A and a large B chain linked by disulfide bonds.

Functionally, 2S seed storage protein having sweetness-inducing activity. This form is not heat stable. This Capparis masaikai (Mabinlang) protein is Sweet protein mabinlin-1.